Reading from the N-terminus, the 263-residue chain is Imidazole glycerol phosphate synthase subunit HisF (263 aa).

Catalysis depends on residues Asp22 and Asp141.

This sequence belongs to the HisA/HisF family. As to quaternary structure, heterodimer of HisH and HisF.

The protein resides in the cytoplasm. It catalyses the reaction 5-[(5-phospho-1-deoxy-D-ribulos-1-ylimino)methylamino]-1-(5-phospho-beta-D-ribosyl)imidazole-4-carboxamide + L-glutamine = D-erythro-1-(imidazol-4-yl)glycerol 3-phosphate + 5-amino-1-(5-phospho-beta-D-ribosyl)imidazole-4-carboxamide + L-glutamate + H(+). Its pathway is amino-acid biosynthesis; L-histidine biosynthesis; L-histidine from 5-phospho-alpha-D-ribose 1-diphosphate: step 5/9. IGPS catalyzes the conversion of PRFAR and glutamine to IGP, AICAR and glutamate. The HisF subunit catalyzes the cyclization activity that produces IGP and AICAR from PRFAR using the ammonia provided by the HisH subunit. In Clavibacter michiganensis subsp. michiganensis (strain NCPPB 382), this protein is Imidazole glycerol phosphate synthase subunit HisF.